The primary structure comprises 287 residues: Bifunctional protein FolD (287 aa).

Residues 166–168 (GAS) and Ile232 contribute to the NADP(+) site.

Belongs to the tetrahydrofolate dehydrogenase/cyclohydrolase family. Homodimer.

The enzyme catalyses (6R)-5,10-methylene-5,6,7,8-tetrahydrofolate + NADP(+) = (6R)-5,10-methenyltetrahydrofolate + NADPH. It catalyses the reaction (6R)-5,10-methenyltetrahydrofolate + H2O = (6R)-10-formyltetrahydrofolate + H(+). The protein operates within one-carbon metabolism; tetrahydrofolate interconversion. Its function is as follows. Catalyzes the oxidation of 5,10-methylenetetrahydrofolate to 5,10-methenyltetrahydrofolate and then the hydrolysis of 5,10-methenyltetrahydrofolate to 10-formyltetrahydrofolate. This chain is Bifunctional protein FolD, found in Buchnera aphidicola subsp. Baizongia pistaciae (strain Bp).